The chain runs to 112 residues: Putative inner membrane protein YafU (112 aa).

The Cytoplasmic portion of the chain corresponds to 1–21 (MSSERDLVNFLGDFSMDVAKA). The chain crosses the membrane as a helical span at residues 22–42 (VIAGGVATAIGSLASFACVSF). Residue G43 is a topological domain, periplasmic. Residues 44–64 (FPVILVGGAILLTGIVCTVVL) form a helical membrane-spanning segment. The Cytoplasmic segment spans residues 65–112 (NEIDAQCHLSEKLKYAIRDGLKRQQELDKWKRENMTPFMYVLNTPPVI).

It localises to the cell inner membrane. This is Putative inner membrane protein YafU (yafU) from Escherichia coli (strain K12).